The primary structure comprises 790 residues: Cadherin-18 (790 aa).

The first 24 residues, 1–24 (MKITSTSCICPVLVCLCFVQRCYG), serve as a signal peptide directing secretion. A propeptide spanning residues 25 to 53 (TAHHSSIKVMRNQTKHIEGETEVHHRPKR) is cleaved from the precursor. An N-linked (GlcNAc...) asparagine glycan is attached at N36. Cadherin domains are found at residues 54-159 (GWVW…APKF), 160-268 (TDGP…PPRF), 269-383 (PQKH…PPLF), 384-486 (SMPS…DNPP), and 487-608 (ELAR…FLSS). Residues 54–608 (GWVWNQFFVL…TCHAEAFLSS (555 aa)) are Extracellular-facing. N255 carries an N-linked (GlcNAc...) asparagine glycan. N-linked (GlcNAc...) asparagine glycosylation is found at N455 and N536. Residues 609-636 (AGLSTGALIAILLCVLILLAIVVLFITL) traverse the membrane as a helical segment. Over 637 to 790 (RRSKKEPLII…YGEIESERTT (154 aa)) the chain is Cytoplasmic. S786 carries the post-translational modification Phosphoserine.

The protein resides in the cell membrane. Cadherins are calcium-dependent cell adhesion proteins. They preferentially interact with themselves in a homophilic manner in connecting cells; cadherins may thus contribute to the sorting of heterogeneous cell types. This Homo sapiens (Human) protein is Cadherin-18 (CDH18).